A 244-amino-acid polypeptide reads, in one-letter code: MHFPVFIMQNHQRRALVLFSGGQDSTTCLAWALDRYAHVETVAFDYGQRHRIELDARLNVLREIRGRFPAWAARLGQDHLLDLKVLGQVGDTAMTSDRAIEMQANGLPNTFVPGRNLLFLTLAAALGYRRQLDVLVGGMCETDFSGYPDCRDDTMKAQQVALSLGLGSRVTIETPLMWLDKADTWALADSLGGESLVQTIVEESHTCYVGERGQRHDWGYGCGECPACVLRKAGWSRWAERAPR.

Position 19 to 29 (Phe-19 to Leu-29) interacts with ATP. Residues Cys-207, Cys-222, Cys-225, and Cys-228 each contribute to the Zn(2+) site.

It belongs to the QueC family. Requires Zn(2+) as cofactor.

It carries out the reaction 7-carboxy-7-deazaguanine + NH4(+) + ATP = 7-cyano-7-deazaguanine + ADP + phosphate + H2O + H(+). It participates in purine metabolism; 7-cyano-7-deazaguanine biosynthesis. Functionally, catalyzes the ATP-dependent conversion of 7-carboxy-7-deazaguanine (CDG) to 7-cyano-7-deazaguanine (preQ(0)). This Bordetella avium (strain 197N) protein is 7-cyano-7-deazaguanine synthase.